Consider the following 129-residue polypeptide: Small ribosomal subunit protein uS11 (129 aa).

The protein belongs to the universal ribosomal protein uS11 family. Part of the 30S ribosomal subunit. Interacts with proteins S7 and S18. Binds to IF-3.

In terms of biological role, located on the platform of the 30S subunit, it bridges several disparate RNA helices of the 16S rRNA. Forms part of the Shine-Dalgarno cleft in the 70S ribosome. This is Small ribosomal subunit protein uS11 from Bacillus anthracis (strain A0248).